The primary structure comprises 362 residues: Alkanal monooxygenase alpha chain (362 aa).

This sequence belongs to the bacterial luciferase oxidoreductase family. In terms of assembly, heterodimer of an alpha and a beta chain.

It carries out the reaction a long-chain fatty aldehyde + FMNH2 + O2 = a long-chain fatty acid + hnu + FMN + H2O + 2 H(+). Functionally, light-emitting reaction in luminous bacteria. The polypeptide is Alkanal monooxygenase alpha chain (luxA) (Photorhabdus luminescens (Xenorhabdus luminescens)).